We begin with the raw amino-acid sequence, 446 residues long: Exodeoxyribonuclease 7 large subunit (446 aa).

Belongs to the XseA family. Heterooligomer composed of large and small subunits.

It is found in the cytoplasm. It catalyses the reaction Exonucleolytic cleavage in either 5'- to 3'- or 3'- to 5'-direction to yield nucleoside 5'-phosphates.. In terms of biological role, bidirectionally degrades single-stranded DNA into large acid-insoluble oligonucleotides, which are then degraded further into small acid-soluble oligonucleotides. This chain is Exodeoxyribonuclease 7 large subunit, found in Streptococcus pyogenes serotype M3 (strain ATCC BAA-595 / MGAS315).